A 173-amino-acid chain; its full sequence is Thiol-disulfide oxidoreductase ResA (173 aa).

Residues Val-10–Phe-29 traverse the membrane as a helical; Signal-anchor for type II membrane protein segment. The Thioredoxin domain occupies Met-35–Pro-173. An intrachain disulfide couples Cys-73 to Cys-76.

Belongs to the thioredoxin family. ResA subfamily.

Its subcellular location is the cell membrane. It participates in protein modification; cytochrome c assembly. Thiol-disulfide oxidoreductase which is required in disulfide reduction during c-type cytochrome synthesis. May accept reducing equivalents from CcdA, leading to breakage of disulfide bonds in apocytochrome c; following this reduction heme can be covalently attached. The polypeptide is Thiol-disulfide oxidoreductase ResA (Bacillus thuringiensis subsp. konkukian (strain 97-27)).